A 289-amino-acid polypeptide reads, in one-letter code: Glucosamine-6-phosphate deaminase 1 (289 aa).

K64 is modified (N6-acetyllysine). D72 (proton acceptor; for enolization step) is an active-site residue. The active-site For ring-opening step is the D141. The Proton acceptor; for ring-opening step role is filled by H143. E148 functions as the For ring-opening step in the catalytic mechanism. Position 161 is a phosphothreonine (T161).

Belongs to the glucosamine/galactosamine-6-phosphate isomerase family. In terms of assembly, homohexamer.

It is found in the cytoplasm. It catalyses the reaction alpha-D-glucosamine 6-phosphate + H2O = beta-D-fructose 6-phosphate + NH4(+). The protein operates within nucleotide-sugar biosynthesis; UDP-N-acetyl-alpha-D-glucosamine biosynthesis; alpha-D-glucosamine 6-phosphate from D-fructose 6-phosphate: step 1/1. Allosterically activated by N-acetylglucosamine-6-phosphate (GlcNAc6P). In terms of biological role, catalyzes the reversible conversion of alpha-D-glucosamine 6-phosphate (GlcN-6P) into beta-D-fructose 6-phosphate (Fru-6P) and ammonium ion, a regulatory reaction step in de novo uridine diphosphate-N-acetyl-alpha-D-glucosamine (UDP-GlcNAc) biosynthesis via hexosamine pathway. Deamination is coupled to aldo-keto isomerization mediating the metabolic flux from UDP-GlcNAc toward Fru-6P. At high ammonium level can drive amination and isomerization of Fru-6P toward hexosamines and UDP-GlcNAc synthesis. Has a role in fine tuning the metabolic fluctuations of cytosolic UDP-GlcNAc and their effects on hyaluronan synthesis that occur during tissue remodeling. Seems to trigger calcium oscillations in mammalian eggs. These oscillations serve as the essential trigger for egg activation and early development of the embryo. This Bos taurus (Bovine) protein is Glucosamine-6-phosphate deaminase 1.